A 301-amino-acid chain; its full sequence is UPF0282 protein Pcal_1546 (301 aa).

This sequence belongs to the UPF0282 family.

This Pyrobaculum calidifontis (strain DSM 21063 / JCM 11548 / VA1) protein is UPF0282 protein Pcal_1546.